The sequence spans 115 residues: Nascent polypeptide-associated complex protein (115 aa).

Residues 6–72 (PMNPKQLKKL…SEEEKAIINI (67 aa)) enclose the NAC-A/B domain.

It belongs to the NAC-alpha family. Homodimer. Interacts with the ribosome. Binds ribosomal RNA.

In terms of biological role, contacts the emerging nascent chain on the ribosome. In Pyrococcus horikoshii (strain ATCC 700860 / DSM 12428 / JCM 9974 / NBRC 100139 / OT-3), this protein is Nascent polypeptide-associated complex protein.